Consider the following 525-residue polypeptide: Protein translocase subunit SecD (525 aa).

The next 6 membrane-spanning stretches (helical) occupy residues 9–29, 368–388, 392–412, 415–435, 460–480, and 487–507; these read LYLV…SLLG, VLIG…GFGM, LAVV…QATL, PGIA…VLIF, FSTI…LYQF, and GFAV…IFVT.

The protein belongs to the SecD/SecF family. SecD subfamily. In terms of assembly, forms a complex with SecF. Part of the essential Sec protein translocation apparatus which comprises SecA, SecYEG and auxiliary proteins SecDF-YajC and YidC.

The protein resides in the cell inner membrane. Part of the Sec protein translocase complex. Interacts with the SecYEG preprotein conducting channel. SecDF uses the proton motive force (PMF) to complete protein translocation after the ATP-dependent function of SecA. This Magnetococcus marinus (strain ATCC BAA-1437 / JCM 17883 / MC-1) protein is Protein translocase subunit SecD.